We begin with the raw amino-acid sequence, 341 residues long: Eukaryotic translation initiation factor 3 subunit I (341 aa).

WD repeat units follow at residues 8 to 47, 56 to 95, 151 to 190, 194 to 233, 235 to 274, and 291 to 331; these read GHER…RLGT, GHNG…CLYT, LSGS…EVQA, EHSA…VMKV, TTET…GKFE, and GHFG…RSRP.

It belongs to the eIF-3 subunit I family. In terms of assembly, component of the eukaryotic translation initiation factor 3 (eIF-3) complex.

The protein resides in the cytoplasm. Functionally, component of the eukaryotic translation initiation factor 3 (eIF-3) complex, which is involved in protein synthesis of a specialized repertoire of mRNAs and, together with other initiation factors, stimulates binding of mRNA and methionyl-tRNAi to the 40S ribosome. The eIF-3 complex specifically targets and initiates translation of a subset of mRNAs involved in cell proliferation. The chain is Eukaryotic translation initiation factor 3 subunit I from Cryptococcus neoformans var. neoformans serotype D (strain B-3501A) (Filobasidiella neoformans).